The primary structure comprises 445 residues: MSKLPRELTRDLERSLPAVASLGSSLSHSQSLSSHLLPPPEKRRAISDVRRTFCLFVTFDLLFISLLWIIELNTNTGIRKNLEQEIIQYNFKTSFFDIFVLAFFRFSGLLLGYAVLRLRHWWVIAVTTLVSSAFLIVKVILSELLSKGAFGYLLPIVSFVLAWLETWFLDFKVLPQEAEEERWYLAAQVAVARGPLLFSGALSEGQFYSPPESFAGSDNESDEEVAGKKSFSAQEREYIRQGKEATAVVDQILAQEENWKFEKNNEYGDTVYTIEVPFHGKTFILKTFLPCPAELVYQEVILQPERMVLWNKTVTACQILQRVEDNTLISYDVSAGAAGGVVSPRDFVNVRRIERRRDRYLSSGIATSHSAKPPTHKYVRGENGPGGFIVLKSASNPRVCTFVWILNTDLKGRLPRYLIHQSLAATMFEFAFHLRQRISELGARA.

Residues 1–51 (MSKLPRELTRDLERSLPAVASLGSSLSHSQSLSSHLLPPPEKRRAISDVRR) are Cytoplasmic-facing. Positions 46–217 (ISDVRRTFCL…YSPPESFAGS (172 aa)) constitute an MENTAL domain. The chain crosses the membrane as a helical span at residues 52–72 (TFCLFVTFDLLFISLLWIIEL). Over 73 to 94 (NTNTGIRKNLEQEIIQYNFKTS) the chain is Extracellular. A helical membrane pass occupies residues 95–115 (FFDIFVLAFFRFSGLLLGYAV). Residues 116 to 120 (LRLRH) lie on the Cytoplasmic side of the membrane. A helical membrane pass occupies residues 121-141 (WWVIAVTTLVSSAFLIVKVIL). At 142 to 148 (SELLSKG) the chain is on the extracellular side. Residues 149-169 (AFGYLLPIVSFVLAWLETWFL) form a helical membrane-spanning segment. The Cytoplasmic portion of the chain corresponds to 170–445 (DFKVLPQEAE…QRISELGARA (276 aa)). An FFAT motif is present at residues 206–212 (QFYSPPE). At S209 the chain carries Phosphoserine. The START domain occupies 230–443 (SFSAQEREYI…LRQRISELGA (214 aa)).

It belongs to the STARD3 family. In terms of assembly, homodimer. Interacts (via the MENTAL domain) with STARD3NL. Interacts (via phosphorylated FFAT motif) with VAPA (via MSP domain). Interacts (via phosphorylated FFAT motif) with VAPB (via MSP domain). Interacts (via phosphorylated FFAT motif) with MOSPD2 (via MSP domain); this interaction allows enrichment of MOSPD2 around endosomes. Post-translationally, phosphorylation at Ser-209 is necessary and sufficient for the direct interaction of the phosphorylated FFAT motif with the MSP domain of MOSPD2, VAPA and VAPB and allows the tethering of two membranes that participates in the formation of ER-endosome contacts. Phosphorylation of the FFAT motif leads to conformation changes. Additional phosphorylations around the core FFAT motif (QFYSPPE) are not essential but strengthen the interaction with MOSPD2, VAPA and VAPB. Phosphorylation at Ser-209 of FFAT motif drives membrane tethering between the endoplasmic reticulum and late endosomes via interaction with VAPA and VAPB that in turn allows the efficient transport of sterol mediated by the START domain. Expressed in retina.

The protein resides in the late endosome membrane. It catalyses the reaction cholesterol(in) = cholesterol(out). Functionally, sterol-binding protein that mediates cholesterol transport from the endoplasmic reticulum to endosomes. The sterol transport mechanism is triggered by phosphorylation of FFAT motif that leads to membrane tethering between the endoplasmic reticulum and late endosomes via interaction with VAPA and VAPB. Acts as a lipid transfer protein that redirects sterol to the endosome at the expense of the cell membrane and favors membrane formation inside endosomes. May also mediate cholesterol transport between other membranes, such as mitochondria membrane or cell membrane. However, such results need additional experimental evidences; probably mainly mediates cholesterol transport from the endoplasmic reticulum to endosomes. Does not activate transcriptional cholesterol sensing. Able to bind other lipids, such as lutein, a xanthophyll carotenoids that form the macular pigment of the retina. The sequence is that of StAR-related lipid transfer protein 3 from Homo sapiens (Human).